The primary structure comprises 248 residues: PF03932 family protein CutC (248 aa).

Belongs to the CutC family. As to quaternary structure, homodimer.

The protein localises to the cytoplasm. The chain is PF03932 family protein CutC from Salmonella newport (strain SL254).